A 296-amino-acid chain; its full sequence is METTYKLLDGKKISGEIKQEIAAVVNELLEKGGRRPHLAGVLVGHDGGSETYMASKVKACEEVGFTSSLIRYEDDVTEEELLACVHRLNQDPTVDGFIVQLPLPKHIDEQKIIEAVDPRKDVDGFHPINVGRLSIGLPGFVSATPKGIVELLRRYNIPTRGKHCVVLGRSNIVGKPVSQLLLQKGEPGDCTITICHSRTPNIKEVCLTADIIIAALGQPEFLTADMVKPGAVVVDVGTTLVPDSTRKSGFRLTGDVKFDEVAPKCSYITPVPGGVGPMTIVSLMSNTLLASKGLYR.

Residues 168–170 (GRS), Ser197, and Thr238 contribute to the NADP(+) site.

The protein belongs to the tetrahydrofolate dehydrogenase/cyclohydrolase family. Homodimer.

It catalyses the reaction (6R)-5,10-methylene-5,6,7,8-tetrahydrofolate + NADP(+) = (6R)-5,10-methenyltetrahydrofolate + NADPH. The enzyme catalyses (6R)-5,10-methenyltetrahydrofolate + H2O = (6R)-10-formyltetrahydrofolate + H(+). It participates in one-carbon metabolism; tetrahydrofolate interconversion. In terms of biological role, catalyzes the oxidation of 5,10-methylenetetrahydrofolate to 5,10-methenyltetrahydrofolate and then the hydrolysis of 5,10-methenyltetrahydrofolate to 10-formyltetrahydrofolate. The polypeptide is Bifunctional protein FolD (Porphyromonas gingivalis (strain ATCC BAA-308 / W83)).